Reading from the N-terminus, the 203-residue chain is Pyridoxine/pyridoxamine 5'-phosphate oxidase (203 aa).

Residues 50–55 (RMVLLK), 65–66 (YT), K72, and Q94 contribute to the FMN site. K55 provides a ligand contact to substrate. Residues Y112, R116, and S120 each contribute to the substrate site. FMN contacts are provided by residues 129–130 (QS) and W174. 180-182 (RLH) is a substrate binding site. R184 is a binding site for FMN.

This sequence belongs to the pyridoxamine 5'-phosphate oxidase family. In terms of assembly, homodimer. FMN is required as a cofactor.

The catalysed reaction is pyridoxamine 5'-phosphate + O2 + H2O = pyridoxal 5'-phosphate + H2O2 + NH4(+). The enzyme catalyses pyridoxine 5'-phosphate + O2 = pyridoxal 5'-phosphate + H2O2. Its pathway is cofactor metabolism; pyridoxal 5'-phosphate salvage; pyridoxal 5'-phosphate from pyridoxamine 5'-phosphate: step 1/1. The protein operates within cofactor metabolism; pyridoxal 5'-phosphate salvage; pyridoxal 5'-phosphate from pyridoxine 5'-phosphate: step 1/1. In terms of biological role, catalyzes the oxidation of either pyridoxine 5'-phosphate (PNP) or pyridoxamine 5'-phosphate (PMP) into pyridoxal 5'-phosphate (PLP). This is Pyridoxine/pyridoxamine 5'-phosphate oxidase from Brucella anthropi (strain ATCC 49188 / DSM 6882 / CCUG 24695 / JCM 21032 / LMG 3331 / NBRC 15819 / NCTC 12168 / Alc 37) (Ochrobactrum anthropi).